A 597-amino-acid polypeptide reads, in one-letter code: Elongation factor 4 (597 aa).

Residues 2–184 enclose the tr-type G domain; it reads KHIRNFSIIA…KIVSAIPAPE (183 aa). Residues 14–19 and 131–134 contribute to the GTP site; these read DHGKST and NKID.

The protein belongs to the TRAFAC class translation factor GTPase superfamily. Classic translation factor GTPase family. LepA subfamily.

Its subcellular location is the cell inner membrane. It catalyses the reaction GTP + H2O = GDP + phosphate + H(+). In terms of biological role, required for accurate and efficient protein synthesis under certain stress conditions. May act as a fidelity factor of the translation reaction, by catalyzing a one-codon backward translocation of tRNAs on improperly translocated ribosomes. Back-translocation proceeds from a post-translocation (POST) complex to a pre-translocation (PRE) complex, thus giving elongation factor G a second chance to translocate the tRNAs correctly. Binds to ribosomes in a GTP-dependent manner. The sequence is that of Elongation factor 4 from Vibrio vulnificus (strain CMCP6).